The sequence spans 274 residues: Diaminopimelate epimerase (274 aa).

Positions 11, 44, and 64 each coordinate substrate. Residue Cys-73 is the Proton donor of the active site. Substrate is bound by residues 74 to 75, Asn-157, Asn-190, and 208 to 209; these read GN and ER. Cys-217 (proton acceptor) is an active-site residue. 218 to 219 serves as a coordination point for substrate; it reads GS.

This sequence belongs to the diaminopimelate epimerase family. In terms of assembly, homodimer.

Its subcellular location is the cytoplasm. The enzyme catalyses (2S,6S)-2,6-diaminopimelate = meso-2,6-diaminopimelate. It participates in amino-acid biosynthesis; L-lysine biosynthesis via DAP pathway; DL-2,6-diaminopimelate from LL-2,6-diaminopimelate: step 1/1. Functionally, catalyzes the stereoinversion of LL-2,6-diaminopimelate (L,L-DAP) to meso-diaminopimelate (meso-DAP), a precursor of L-lysine and an essential component of the bacterial peptidoglycan. The protein is Diaminopimelate epimerase of Pectobacterium carotovorum subsp. carotovorum (strain PC1).